Here is a 360-residue protein sequence, read N- to C-terminus: Phenylalanine--tRNA ligase alpha subunit (360 aa).

Position 260 (glutamate 260) interacts with Mg(2+).

This sequence belongs to the class-II aminoacyl-tRNA synthetase family. Phe-tRNA synthetase alpha subunit type 1 subfamily. In terms of assembly, tetramer of two alpha and two beta subunits. Mg(2+) is required as a cofactor.

The protein localises to the cytoplasm. It carries out the reaction tRNA(Phe) + L-phenylalanine + ATP = L-phenylalanyl-tRNA(Phe) + AMP + diphosphate + H(+). This chain is Phenylalanine--tRNA ligase alpha subunit, found in Bradyrhizobium sp. (strain ORS 278).